The sequence spans 512 residues: Histidine ammonia-lyase (512 aa).

The 5-imidazolinone (Ala-Gly) cross-link spans 142–144 (ASG). S143 carries the post-translational modification 2,3-didehydroalanine (Ser).

Belongs to the PAL/histidase family. Contains an active site 4-methylidene-imidazol-5-one (MIO), which is formed autocatalytically by cyclization and dehydration of residues Ala-Ser-Gly.

Its subcellular location is the cytoplasm. The enzyme catalyses L-histidine = trans-urocanate + NH4(+). It participates in amino-acid degradation; L-histidine degradation into L-glutamate; N-formimidoyl-L-glutamate from L-histidine: step 1/3. This chain is Histidine ammonia-lyase, found in Allorhizobium ampelinum (strain ATCC BAA-846 / DSM 112012 / S4) (Agrobacterium vitis (strain S4)).